The following is a 515-amino-acid chain: Integrator complex subunit 14 (515 aa).

The 203-residue stretch at 2-204 folds into the VWFA domain; the sequence is PTVVVMDVSL…KNVQSMFGKL (203 aa). Positions 10, 12, and 86 each coordinate Mg(2+). Position 418 is an N6-acetyllysine (Lys418).

The protein belongs to the Integrator subunit 14 family. Component of the Integrator complex, composed of core subunits INTS1, INTS2, INTS3, INTS4, INTS5, INTS6, INTS7, INTS8, INTS9/RC74, INTS10, INTS11/CPSF3L, INTS12, INTS13, INTS14 and INTS15. The core complex associates with protein phosphatase 2A subunits PPP2CA and PPP2R1A, to form the Integrator-PP2A (INTAC) complex. INTS14 is part of the tail subcomplex, composed of INTS10, INTS13, INTS14 and INTS15.

Its subcellular location is the nucleus. In terms of biological role, component of the integrator complex, a multiprotein complex that terminates RNA polymerase II (Pol II) transcription in the promoter-proximal region of genes. The integrator complex provides a quality checkpoint during transcription elongation by driving premature transcription termination of transcripts that are unfavorably configured for transcriptional elongation: the complex terminates transcription by (1) catalyzing dephosphorylation of the C-terminal domain (CTD) of Pol II subunit POLR2A/RPB1 and SUPT5H/SPT5, (2) degrading the exiting nascent RNA transcript via endonuclease activity and (3) promoting the release of Pol II from bound DNA. The integrator complex is also involved in terminating the synthesis of non-coding Pol II transcripts, such as enhancer RNAs (eRNAs), small nuclear RNAs (snRNAs), telomerase RNAs and long non-coding RNAs (lncRNAs). Within the integrator complex, INTS14 is part of the integrator tail module that acts as a platform for the recruitment of transcription factors at promoters. In Rattus norvegicus (Rat), this protein is Integrator complex subunit 14.